We begin with the raw amino-acid sequence, 517 residues long: Beclin-1-like protein (517 aa).

The tract at residues 76-106 is disordered; the sequence is LPRHKPPQSQGIPPRPRGASSPQPDATQSGK. The span at 95-105 shows a compositional bias: polar residues; sequence SSPQPDATQSG. The stretch at 172–266 forms a coiled coil; it reads CLECMRVLSD…NRFNELEDRY (95 aa).

It belongs to the beclin family. Component of a phosphatidylinositol 3-kinase (PI3K) complex composed of ATG6, SH3P2 and FREE1. Interacts with SINAT1, SINAT2, SINAT5, SINAT6, TRAF1A and TRAF1B. Interacts with TUBB8/TUB8. Component of a complex made of VPS38/USL1 and PI3K main subunits such as VPS15, ATG6/VPS30 and VPS34. Binds directly to VPS38/USL1. In terms of processing, ubiquitinated. The interaction with SINAT1 or SINAT2, and the presence of TRAF1A/MUSE14 and TRAF1B/MUSE13, mediates its proteasome-dependent degradation. Highly expressed in mature pollen grains. Expressed in roots, leaves, stems, flowers and siliques.

Its subcellular location is the cytoplasm. The protein localises to the cytoskeleton. In terms of biological role, required for normal plant development. Required for pollen germination. Required for autophagic activity. Required to limit the pathogen-associated cell death response. May be involved in vacuolar protein sorting. Binds to microtubules. May facilitate efficient recruitment of other ATG proteins to assemble scaffolds for autophagosome biogenesis. The chain is Beclin-1-like protein from Arabidopsis thaliana (Mouse-ear cress).